We begin with the raw amino-acid sequence, 273 residues long: Dermonecrotic toxin LsaSicTox-alphaIB1aiii (273 aa).

The active site involves His5. Mg(2+)-binding residues include Glu25 and Asp27. The active-site Nucleophile is the His41. 2 cysteine pairs are disulfide-bonded: Cys45–Cys51 and Cys47–Cys190. Asp85 contributes to the Mg(2+) binding site.

It belongs to the arthropod phospholipase D family. Class II subfamily. Mg(2+) is required as a cofactor. Expressed by the venom gland.

Its subcellular location is the secreted. The catalysed reaction is an N-(acyl)-sphingosylphosphocholine = an N-(acyl)-sphingosyl-1,3-cyclic phosphate + choline. It catalyses the reaction an N-(acyl)-sphingosylphosphoethanolamine = an N-(acyl)-sphingosyl-1,3-cyclic phosphate + ethanolamine. It carries out the reaction a 1-acyl-sn-glycero-3-phosphocholine = a 1-acyl-sn-glycero-2,3-cyclic phosphate + choline. The enzyme catalyses a 1-acyl-sn-glycero-3-phosphoethanolamine = a 1-acyl-sn-glycero-2,3-cyclic phosphate + ethanolamine. In terms of biological role, dermonecrotic toxins cleave the phosphodiester linkage between the phosphate and headgroup of certain phospholipids (sphingolipid and lysolipid substrates), forming an alcohol (often choline) and a cyclic phosphate. This toxin acts on sphingomyelin (SM). It may also act on ceramide phosphoethanolamine (CPE), lysophosphatidylcholine (LPC) and lysophosphatidylethanolamine (LPE), but not on lysophosphatidylserine (LPS), and lysophosphatidylglycerol (LPG). It acts by transphosphatidylation, releasing exclusively cyclic phosphate products as second products. Induces dermonecrosis, hemolysis, increased vascular permeability, edema, inflammatory response, and platelet aggregation. This is Dermonecrotic toxin LsaSicTox-alphaIB1aiii from Loxosceles sabina (Tucson recluse spider).